The following is a 306-amino-acid chain: Mitochondrial basic amino acids transporter (306 aa).

The next 6 membrane-spanning stretches (helical) occupy residues 2–22 (ALDF…GHPF), 61–81 (GLGS…GVQG), 96–116 (FLAG…MELA), 153–172 (GMVS…FLTY), 187–207 (LLVP…WLST), and 255–275 (LLRA…VLTY). Solcar repeat units follow at residues 2-86 (ALDF…TLRA), 90-178 (DSPL…LTRA), and 190-275 (PKLL…VLTY). The disordered stretch occupies residues 283–306 (VDSEAAPGASTTPAGPALAQPSSL). The segment covering 287 to 306 (AAPGASTTPAGPALAQPSSL) has biased composition (low complexity).

Belongs to the mitochondrial carrier (TC 2.A.29) family.

Its subcellular location is the mitochondrion inner membrane. It carries out the reaction L-lysine(out) + L-arginine(in) = L-lysine(in) + L-arginine(out). The enzyme catalyses L-histidine(out) + L-arginine(in) = L-histidine(in) + L-arginine(out). It catalyses the reaction L-ornithine(in) + L-arginine(out) = L-ornithine(out) + L-arginine(in). The catalysed reaction is L-homoarginine(in) + L-arginine(out) = L-homoarginine(out) + L-arginine(in). It carries out the reaction N(omega)-methyl-L-arginine(in) + L-arginine(out) = N(omega)-methyl-L-arginine(out) + L-arginine(in). The enzyme catalyses L-arginine(in) = L-arginine(out). It catalyses the reaction L-lysine(in) = L-lysine(out). The catalysed reaction is L-ornithine(in) = L-ornithine(out). It carries out the reaction L-histidine(out) = L-histidine(in). In terms of biological role, mitochondrial transporter of arginine, lysine, homoarginine, methylarginine and, to a much lesser extent, ornithine and histidine. Does not transport carnitine nor acylcarnitines. Functions by both counter-exchange and uniport mechanisms. Plays a physiological role in the import of basic amino acids into mitochondria for mitochondrial protein synthesis and amino acid degradation. The polypeptide is Mitochondrial basic amino acids transporter (Slc25a29) (Rattus norvegicus (Rat)).